Reading from the N-terminus, the 404-residue chain is Homoserine O-succinyltransferase (404 aa).

The span at 1-25 (MTDIQADPAVTAADAAQADTSSPTA) shows a compositional bias: low complexity. The tract at residues 1–30 (MTDIQADPAVTAADAAQADTSSPTAHQGKP) is disordered. One can recognise an AB hydrolase-1 domain in the interval 75 to 384 (NAVLICHALN…HGHDAFLLED (310 aa)). S179 serves as the catalytic Nucleophile. Residue R249 coordinates substrate. Catalysis depends on residues D344 and H377. D378 serves as a coordination point for substrate.

The protein belongs to the AB hydrolase superfamily. MetX family. As to quaternary structure, homodimer.

Its subcellular location is the cytoplasm. It catalyses the reaction L-homoserine + succinyl-CoA = O-succinyl-L-homoserine + CoA. The protein operates within amino-acid biosynthesis; L-methionine biosynthesis via de novo pathway; O-succinyl-L-homoserine from L-homoserine: step 1/1. Functionally, transfers a succinyl group from succinyl-CoA to L-homoserine, forming succinyl-L-homoserine. This chain is Homoserine O-succinyltransferase, found in Ralstonia pickettii (strain 12J).